A 174-amino-acid polypeptide reads, in one-letter code: Chorismate pyruvate-lyase (174 aa).

The substrate site is built by methionine 36, arginine 78, leucine 116, and glutamate 157.

This sequence belongs to the UbiC family. In terms of assembly, monomer.

It is found in the cytoplasm. The catalysed reaction is chorismate = 4-hydroxybenzoate + pyruvate. It participates in cofactor biosynthesis; ubiquinone biosynthesis. Functionally, removes the pyruvyl group from chorismate, with concomitant aromatization of the ring, to provide 4-hydroxybenzoate (4HB) for the ubiquinone pathway. This Serratia proteamaculans (strain 568) protein is Chorismate pyruvate-lyase.